The sequence spans 390 residues: Chorismate synthase (390 aa).

NADP(+) is bound by residues Arg-39 and Arg-45. Residues 132 to 134 (RSS), 253 to 254 (NA), Gly-298, 313 to 317 (KPIPT), and Arg-339 each bind FMN.

This sequence belongs to the chorismate synthase family. As to quaternary structure, homotetramer. FMNH2 is required as a cofactor.

The catalysed reaction is 5-O-(1-carboxyvinyl)-3-phosphoshikimate = chorismate + phosphate. Its pathway is metabolic intermediate biosynthesis; chorismate biosynthesis; chorismate from D-erythrose 4-phosphate and phosphoenolpyruvate: step 7/7. In terms of biological role, catalyzes the anti-1,4-elimination of the C-3 phosphate and the C-6 proR hydrogen from 5-enolpyruvylshikimate-3-phosphate (EPSP) to yield chorismate, which is the branch point compound that serves as the starting substrate for the three terminal pathways of aromatic amino acid biosynthesis. This reaction introduces a second double bond into the aromatic ring system. This chain is Chorismate synthase, found in Bacillus licheniformis (strain ATCC 14580 / DSM 13 / JCM 2505 / CCUG 7422 / NBRC 12200 / NCIMB 9375 / NCTC 10341 / NRRL NRS-1264 / Gibson 46).